The primary structure comprises 251 residues: tRNA (guanine-N(1)-)-methyltransferase (251 aa).

Residues Gly113 and Met133–Leu138 contribute to the S-adenosyl-L-methionine site.

The protein belongs to the RNA methyltransferase TrmD family. As to quaternary structure, homodimer.

It localises to the cytoplasm. It carries out the reaction guanosine(37) in tRNA + S-adenosyl-L-methionine = N(1)-methylguanosine(37) in tRNA + S-adenosyl-L-homocysteine + H(+). In terms of biological role, specifically methylates guanosine-37 in various tRNAs. This Sodalis glossinidius (strain morsitans) protein is tRNA (guanine-N(1)-)-methyltransferase.